A 37-amino-acid chain; its full sequence is uncharacterized protein (37 aa).

The protein belongs to the poxviridae A56.5 protein family.

This is an uncharacterized protein from Vaccinia virus (strain Western Reserve) (VACV).